The following is a 300-amino-acid chain: MHDFPDIDFTQRFIFDESDVRGELVALERSYAEVLAKHPYPEPVAQLLGELMAAAALLVGTLKFDGLLILQARSSGAVPLLMVECSSERELRGIARYDEALITPGAGLQDLMPDGSLALTVDPRQGKRYQGIVALDGVDLSESLSNYFVMSEQLGTRFWLKADGHRARGLLLQQLPAAQITDPEERDASWEHVVTLASTLTAEEMLSLDNQTVLHRLYHEDPVRLFDVQPICFRCSCSRERSANALASLGLEDAQQLVIEHNGSIEIDCQFCNERYLFDATDVAQLFAGGGVDSPSDTRH.

2 disulfide bridges follow: C235–C237 and C269–C272.

The protein belongs to the HSP33 family. Post-translationally, under oxidizing conditions two disulfide bonds are formed involving the reactive cysteines. Under reducing conditions zinc is bound to the reactive cysteines and the protein is inactive.

Its subcellular location is the cytoplasm. Its function is as follows. Redox regulated molecular chaperone. Protects both thermally unfolding and oxidatively damaged proteins from irreversible aggregation. Plays an important role in the bacterial defense system toward oxidative stress. The polypeptide is 33 kDa chaperonin (Pseudomonas syringae pv. tomato (strain ATCC BAA-871 / DC3000)).